Consider the following 87-residue polypeptide: Small ribosomal subunit protein bS20 (87 aa).

The protein belongs to the bacterial ribosomal protein bS20 family.

Its function is as follows. Binds directly to 16S ribosomal RNA. The sequence is that of Small ribosomal subunit protein bS20 from Shigella flexneri.